Consider the following 299-residue polypeptide: MALLVRVLRNQTSISQWVPVCSRLIPVSPTQGQGDRALSRTSQWPQMSQSRACGGSEQIPGIDIQLNRKYHTTRKLSTTKDSPQPVEEKVGAFTKIIEAMGFTGPLKYSKWKIKIAALRMYTSCVEKTDFEEFFLRCQMPDTFNSWFLITLLHVWMCLVRMKQEGRSGKYMCRIIVHFMWEDVQQRGRVMGVNPYILKKNMILMTNHFYAAILGYDEGILSDDHGLAAALWRTFFNRKCEDPRHLELLVEYVRKQIQYLDSMNGEDLLLTGEVSWRPLVEKNPQSILKPHSPTYNDEGL.

It belongs to the CBP3 family. As to quaternary structure, interacts with UQCC2. Interacts with UQCC3. Forms a complex, named COMB/coordinator of mitochondrial CYTB biogenesis, composed of UQCC1, UQCC2, UQCC4, UQCC5 and UQCC6; stabilizes nascent cytochrome b/MT-CYB and promotes its membrane insertion. Forms a complex, named COMB/coordinator of mitochondrial CYTB biogenesis, composed of UQCC1, UQCC2, UQCC4, UQCC5 and UQCC6; stabilizes nascent cytochrome b/MT-CYB and promotes its membrane insertion. Forms a complex, named COMA, composed of UQCC1, UQCC2 and UQCC4; activates MT-CYB translation. Forms a complex, named COMC, composed of UQCC1, UQCC2; UQCC3 and UQCC4; mediates MT-CYB hemylation and association with the first nuclear-encoded CIII subunit UQCRQ.

Its subcellular location is the mitochondrion inner membrane. It localises to the cytoplasmic vesicle. In terms of biological role, required for the assembly of the ubiquinol-cytochrome c reductase complex (mitochondrial respiratory chain complex III or cytochrome b-c1 complex). Involved in cytochrome b translation and/or stability. The protein is Ubiquinol-cytochrome c reductase complex assembly factor 1 (UQCC1) of Homo sapiens (Human).